We begin with the raw amino-acid sequence, 200 residues long: GTP cyclohydrolase-2 (200 aa).

Residue Arg-52–Glu-56 coordinates GTP. Cys-57, Cys-68, and Cys-70 together coordinate Zn(2+). Residues Gln-73, Glu-94 to Arg-96, and Thr-116 contribute to the GTP site. Asp-128 serves as the catalytic Proton acceptor. Arg-130 serves as the catalytic Nucleophile. Positions 151 and 156 each coordinate GTP.

The protein belongs to the GTP cyclohydrolase II family. The cofactor is Zn(2+).

It catalyses the reaction GTP + 4 H2O = 2,5-diamino-6-hydroxy-4-(5-phosphoribosylamino)-pyrimidine + formate + 2 phosphate + 3 H(+). It functions in the pathway cofactor biosynthesis; riboflavin biosynthesis; 5-amino-6-(D-ribitylamino)uracil from GTP: step 1/4. Its function is as follows. Catalyzes the conversion of GTP to 2,5-diamino-6-ribosylamino-4(3H)-pyrimidinone 5'-phosphate (DARP), formate and pyrophosphate. This is GTP cyclohydrolase-2 from Psychromonas ingrahamii (strain DSM 17664 / CCUG 51855 / 37).